The primary structure comprises 112 residues: Putative transposase YkgN (112 aa).

It belongs to the transposase 8 family.

This is Putative transposase YkgN (ykgN) from Escherichia coli (strain K12).